The primary structure comprises 417 residues: XO lethal protein 1 (417 aa).

The interval 373-417 (VSPGETSSEGISDEHHYEEYDEDDIMEEEEAPSARQDDTYDEDEE) is disordered. Acidic residues predominate over residues 391–403 (EYDEDDIMEEEEA).

The protein belongs to the GHMP kinase family. Xol-1 subfamily.

The protein localises to the nucleus. Functionally, sex-determining factor that is required for sexual differentiation and X chromosome dosage compensation to promote male development. High expression during gastrulation triggers male development, while low expression at that time triggers hermaphrodite development. Although related to GHMP kinase, its mode of action remains unclear. The protein is XO lethal protein 1 of Caenorhabditis elegans.